Consider the following 259-residue polypeptide: Putative carbamate hydrolase RutD (259 aa).

Belongs to the AB hydrolase superfamily. Hydrolase RutD family.

It carries out the reaction carbamate + 2 H(+) = NH4(+) + CO2. Involved in pyrimidine catabolism. May facilitate the hydrolysis of carbamate, a reaction that can also occur spontaneously. The chain is Putative carbamate hydrolase RutD from Pseudomonas savastanoi pv. phaseolicola (strain 1448A / Race 6) (Pseudomonas syringae pv. phaseolicola (strain 1448A / Race 6)).